Reading from the N-terminus, the 195-residue chain is dTTP/UTP pyrophosphatase (195 aa).

The Proton acceptor role is filled by aspartate 76.

This sequence belongs to the Maf family. YhdE subfamily. The cofactor is a divalent metal cation.

It localises to the cytoplasm. It carries out the reaction dTTP + H2O = dTMP + diphosphate + H(+). The catalysed reaction is UTP + H2O = UMP + diphosphate + H(+). Nucleoside triphosphate pyrophosphatase that hydrolyzes dTTP and UTP. May have a dual role in cell division arrest and in preventing the incorporation of modified nucleotides into cellular nucleic acids. This Shewanella frigidimarina (strain NCIMB 400) protein is dTTP/UTP pyrophosphatase.